The sequence spans 84 residues: Small ribosomal subunit protein bS16 (84 aa).

The protein belongs to the bacterial ribosomal protein bS16 family.

The chain is Small ribosomal subunit protein bS16 from Dechloromonas aromatica (strain RCB).